The primary structure comprises 158 residues: UPF0178 protein RPA2191 (158 aa).

The protein belongs to the UPF0178 family.

In Rhodopseudomonas palustris (strain ATCC BAA-98 / CGA009), this protein is UPF0178 protein RPA2191.